A 93-amino-acid polypeptide reads, in one-letter code: Alpha-defensin 3 (93 aa).

An N-terminal signal peptide occupies residues 1–16; that stretch reads MKTLVLLSALVLLAFQ. Residues 17-58 constitute a propeptide that is removed on maturation; that stretch reads VQADPIQNTDEETKTEEQPGEDDQAVSVSFGDPEGSSLQEES. The segment at 22–56 is disordered; that stretch reads IQNTDEETKTEEQPGEDDQAVSVSFGDPEGSSLQE. 3 disulfide bridges follow: Cys-64–Cys-92, Cys-66–Cys-81, and Cys-71–Cys-91.

This sequence belongs to the alpha-defensin family. As to expression, paneth cells of the small bowel.

The protein resides in the secreted. Functionally, probably contributes to the antimicrobial barrier function of the small bowel mucosa. The polypeptide is Alpha-defensin 3 (Defa3) (Mus musculus (Mouse)).